The sequence spans 178 residues: High mobility group B protein 1 (178 aa).

Basic and acidic residues-rich tracts occupy residues 1–52 (MKTA…DPNK) and 101–118 (APYE…EKQM). Disordered stretches follow at residues 1 to 59 (MKTA…APSA) and 75 to 178 (NPNV…EEED). A DNA-binding region (HMG box) is located at residues 53–122 (PKRAPSAFFV…EYEKQMDAYN (70 aa)). Phosphoserine occurs at positions 137 and 146. Residues 140-178 (NDEDEASGEEELLEKEAAGDDEEEEEEEDDDDDDDEEED) are compositionally biased toward acidic residues.

Belongs to the HMGB family. In terms of tissue distribution, expressed in cotyledons, roots, stems, leaves and flowers (excluding pedicels).

Its subcellular location is the nucleus. Binds preferentially double-stranded DNA. Modulates general plant growth and stress tolerance. Confers sensitivity to salt and genotoxic (methyl methanesulfonate, MMS) stresses. In Arabidopsis thaliana (Mouse-ear cress), this protein is High mobility group B protein 1 (HMGB1).